Reading from the N-terminus, the 101-residue chain is Citrinin resistance protein, mitochondrial (101 aa).

It is found in the mitochondrion. In terms of biological role, mitochondrial protein that is involved in citrinin resistance. The chain is Citrinin resistance protein, mitochondrial from Saccharomyces cerevisiae (strain ATCC 204508 / S288c) (Baker's yeast).